A 295-amino-acid chain; its full sequence is Nucleotide-binding protein BLi03725/BL03417 (295 aa).

Position 16–23 (16–23) interacts with ATP; that stretch reads GMSGAGKT. 67-70 lines the GTP pocket; it reads DLRG.

It belongs to the RapZ-like family.

In terms of biological role, displays ATPase and GTPase activities. This Bacillus licheniformis (strain ATCC 14580 / DSM 13 / JCM 2505 / CCUG 7422 / NBRC 12200 / NCIMB 9375 / NCTC 10341 / NRRL NRS-1264 / Gibson 46) protein is Nucleotide-binding protein BLi03725/BL03417.